The sequence spans 192 residues: Superoxide dismutase [Fe] (192 aa).

The Fe cation site is built by H27, H74, D157, and H161.

Belongs to the iron/manganese superoxide dismutase family. Homodimer. Requires Fe cation as cofactor.

It carries out the reaction 2 superoxide + 2 H(+) = H2O2 + O2. Its function is as follows. Destroys superoxide anion radicals which are normally produced within the cells and which are toxic to biological systems. The chain is Superoxide dismutase [Fe] (sodB) from Legionella pneumophila subsp. pneumophila (strain Philadelphia 1 / ATCC 33152 / DSM 7513).